The chain runs to 441 residues: Aminopeptidase C (441 aa).

Active-site residues include C70, H361, and N382.

It belongs to the peptidase C1 family.

The enzyme catalyses Inactivates bleomycin B2 (a cytotoxic glycometallopeptide) by hydrolysis of a carboxyamide bond of beta-aminoalanine, but also shows general aminopeptidase activity. The specificity varies somewhat with source, but amino acid arylamides of Met, Leu and Ala are preferred.. This is Aminopeptidase C (pepC) from Listeria monocytogenes serovar 1/2a (strain ATCC BAA-679 / EGD-e).